The sequence spans 80 residues: MKTGIKKVKLHVKKNDSVVVISGNDKGKAGKVLRVYPQKGRVIIEGVNIRKRHMKPTQSHPQGSIIEREFPIHASNVKKS.

The segment at 53–80 (HMKPTQSHPQGSIIEREFPIHASNVKKS) is disordered.

It belongs to the universal ribosomal protein uL24 family. Part of the 50S ribosomal subunit.

Its function is as follows. One of two assembly initiator proteins, it binds directly to the 5'-end of the 23S rRNA, where it nucleates assembly of the 50S subunit. In terms of biological role, one of the proteins that surrounds the polypeptide exit tunnel on the outside of the subunit. The protein is Large ribosomal subunit protein uL24 of Chlorobium limicola (strain DSM 245 / NBRC 103803 / 6330).